The primary structure comprises 291 residues: Sulfate transport system permease protein CysW (291 aa).

Residues 1-22 lie on the Cytoplasmic side of the membrane; it reads MAEVTQLKRYDARPINWGKWFL. Residues 23–43 form a helical membrane-spanning segment; that stretch reads IGIGMLVSAFILLVPMIYIFV. The Periplasmic portion of the chain corresponds to 44-69; sequence QAFSKGLMPVLQNLADPDMLHAIWLT. The ABC transmembrane type-1 domain occupies 66-270; it reads IWLTVMIALI…MAIITLFLKS (205 aa). The helical transmembrane segment at 70–90 threads the bilayer; that stretch reads VMIALIAVPVNLVFGILLAWL. Residues 91-104 are Cytoplasmic-facing; sequence VTRFNFPGRQLLLT. The chain crosses the membrane as a helical span at residues 105–125; sequence LLDIPFAVSPVVAGLVYLLFY. Residues 126–141 lie on the Periplasmic side of the membrane; that stretch reads GSNGPLGGWLDEHNLQ. Residues 142–162 traverse the membrane as a helical segment; sequence IMFSWPGMVLVTIFVTCPFVV. Residues 163–200 are Cytoplasmic-facing; it reads RELVPVMLSQGSQEDEAAILLGASGWQMFRRVTLPNIR. Residues 201 to 221 traverse the membrane as a helical segment; the sequence is WALLYGVVLTNARAIGEFGAV. Topologically, residues 222 to 247 are periplasmic; the sequence is SVVSGSIRGETLSLPLQIELLEQDYN. The helical transmembrane segment at 248 to 268 threads the bilayer; the sequence is TVGSFTAAALLTLMAIITLFL. Topologically, residues 269-291 are cytoplasmic; it reads KSMLQWRLENQEKRAQQEEHHEH.

This sequence belongs to the binding-protein-dependent transport system permease family. CysTW subfamily. As to quaternary structure, the complex is composed of two ATP-binding proteins (CysA), two transmembrane proteins (CysT and CysW) and a solute-binding protein (CysP).

The protein resides in the cell inner membrane. Functionally, part of the ABC transporter complex CysAWTP (TC 3.A.1.6.1) involved in sulfate/thiosulfate import. Probably responsible for the translocation of the substrate across the membrane. This chain is Sulfate transport system permease protein CysW (cysW), found in Escherichia coli O6:H1 (strain CFT073 / ATCC 700928 / UPEC).